The chain runs to 432 residues: Septin-14 (432 aa).

Positions Gln49–Lys315 constitute a Septin-type G domain. A G1 motif region spans residues Gly59–Ser66. GTP is bound by residues Gly59–Ser66, Gly114, Lys195–Asp203, Gly249, and Arg264. The segment at Glu111–Gly114 is G3 motif. The interval Ala194–Asp197 is G4 motif. The stretch at Glu332 to Ala412 forms a coiled coil. The required for interaction with SEPTIN4. Required for migration of cortical neurons during corticogenesis stretch occupies residues Glu369–Lys432.

It belongs to the TRAFAC class TrmE-Era-EngA-EngB-Septin-like GTPase superfamily. Septin GTPase family. As to quaternary structure, septins polymerize into heterooligomeric protein complexes that form filaments, and can associate with cellular membranes, actin filaments and microtubules. GTPase activity is required for filament formation. Interacts with ACTN4. Interacts with SEPTIN9. Interacts (via C-terminus) with SEPTIN4. In terms of tissue distribution, testis-specific (at protein level).

It is found in the cytoplasm. It localises to the cytoskeleton. The protein resides in the cell projection. Its subcellular location is the axon. The protein localises to the dendrite. It is found in the perikaryon. It localises to the perinuclear region. The protein resides in the cytoplasmic vesicle. Its subcellular location is the secretory vesicle. The protein localises to the acrosome. In terms of biological role, filament-forming cytoskeletal GTPase. Involved in the migration of cortical neurons and the formation of neuron leading processes during embryonic development. Plays a role in sperm head formation during spermiogenesis, potentially via facilitating localization of ACTN4 to cell filaments. This is Septin-14 from Homo sapiens (Human).